A 744-amino-acid chain; its full sequence is Collagen alpha-1(VIII) chain (744 aa).

A signal peptide spans 1–27 (MAVPPGPPQLLQVLLTISLGSIRLIQA). The interval 29–117 (AYYGIKPLPP…GKEIPLASLR (89 aa)) is nonhelical region (NC2). Residues 101-110 (KEAVPKKGKE) show a composition bias toward basic and acidic residues. 2 disordered regions span residues 101-435 (KEAV…GLQG) and 478-584 (LLGP…QGEY). A triple-helical region region spans residues 118-571 (GEQGPRGEPG…PGPPGPPGPP (454 aa)). Positions 128–137 (PRGPPGPPGL) are enriched in pro residues. Residues 168 to 190 (KPGAMGMPGAKGEIGPKGEIGPM) are compositionally biased toward low complexity. Over residues 203–217 (GLPGIGKPGGPGLPG) the composition is skewed to gly residues. Residues 288–298 (KPGPPGEPGPQ) are compositionally biased toward pro residues. The segment covering 328–337 (GFPGGKGEQG) has biased composition (gly residues). Over residues 389–403 (PGEPGLPGIPGPMGP) the composition is skewed to pro residues. Over residues 411–420 (GPKGEGGIVG) the composition is skewed to gly residues. Composition is skewed to low complexity over residues 478 to 506 (LLGP…TGPS) and 540 to 556 (LHGP…QGQP). Positions 558–579 (LPGPPGPPGPPGPPAVMPPTPA) are enriched in pro residues. Residues 572 to 744 (AVMPPTPAPQ…SFSGYLLYPM (173 aa)) form a nonhelical region (NC1) region. The 134-residue stretch at 611 to 744 (PAYEMPAFTA…SFSGYLLYPM (134 aa)) folds into the C1q domain.

As to quaternary structure, homotrimers, or heterotrimers in association with alpha 2(VIII) type collagens. Four homotrimers can form a tetrahedron stabilized by central interacting C-terminal NC1 trimers. In terms of processing, prolines at the third position of the tripeptide repeating unit (G-X-Y) are hydroxylated in some or all of the chains. Proteolytically cleaved by neutrophil elastase, in vitro. Proteolytic processing produces the C-terminal NC1 domain fragment, vastatin.

The protein localises to the secreted. Its subcellular location is the extracellular space. The protein resides in the extracellular matrix. It localises to the basement membrane. Functionally, macromolecular component of the subendothelium. Major component of the Descemet's membrane (basement membrane) of corneal endothelial cells. Also a component of the endothelia of blood vessels. Necessary for migration and proliferation of vascular smooth muscle cells and thus, has a potential role in the maintenance of vessel wall integrity and structure, in particular in atherogenesis. Vastatin, the C-terminal fragment comprising the NC1 domain, inhibits aortic endothelial cell proliferation and causes cell apoptosis. The polypeptide is Collagen alpha-1(VIII) chain (COL8A1) (Oryctolagus cuniculus (Rabbit)).